Consider the following 392-residue polypeptide: Histidinol-phosphate aminotransferase 2 (392 aa).

Lys228 is subject to N6-(pyridoxal phosphate)lysine.

It belongs to the class-II pyridoxal-phosphate-dependent aminotransferase family. Histidinol-phosphate aminotransferase subfamily. In terms of assembly, homodimer. It depends on pyridoxal 5'-phosphate as a cofactor.

It catalyses the reaction L-histidinol phosphate + 2-oxoglutarate = 3-(imidazol-4-yl)-2-oxopropyl phosphate + L-glutamate. It functions in the pathway amino-acid biosynthesis; L-histidine biosynthesis; L-histidine from 5-phospho-alpha-D-ribose 1-diphosphate: step 7/9. In Nitrosospira multiformis (strain ATCC 25196 / NCIMB 11849 / C 71), this protein is Histidinol-phosphate aminotransferase 2.